The following is a 145-amino-acid chain: Venom protein 30.1 (145 aa).

Residues 1–18 (MIIVKLFTCLLMVSSVLT) form the signal peptide.

Contains 5 disulfide bonds. In terms of tissue distribution, expressed by the venom gland.

The protein localises to the secreted. The chain is Venom protein 30.1 from Lychas mucronatus (Chinese swimming scorpion).